The sequence spans 124 residues: Holo-[acyl-carrier-protein] synthase (124 aa).

Mg(2+) contacts are provided by Asp5 and Glu56.

This sequence belongs to the P-Pant transferase superfamily. AcpS family. Requires Mg(2+) as cofactor.

It is found in the cytoplasm. The catalysed reaction is apo-[ACP] + CoA = holo-[ACP] + adenosine 3',5'-bisphosphate + H(+). Its function is as follows. Transfers the 4'-phosphopantetheine moiety from coenzyme A to a Ser of acyl-carrier-protein. The chain is Holo-[acyl-carrier-protein] synthase from Campylobacter hominis (strain ATCC BAA-381 / DSM 21671 / CCUG 45161 / LMG 19568 / NCTC 13146 / CH001A).